The primary structure comprises 653 residues: Endoglin (653 aa).

The N-terminal stretch at 1-26 is a signal peptide; it reads MDRGVLPLPITLLFVIYSFVPTTGLA. The segment at 27-47 is OR1, N-terminal part; that stretch reads ERVGCDLQPVDPTRGEVTFTT. The interval 27–337 is required for interaction with GDF2; it reads ERVGCDLQPV…SSCGGVFQTT (311 aa). Residues 27-581 lie on the Extracellular side of the membrane; it reads ERVGCDLQPV…IVSPDLSGKG (555 aa). 7 cysteine pairs are disulfide-bonded: cysteine 31-cysteine 209, cysteine 54-cysteine 184, cysteine 244-cysteine 330, cysteine 350-cysteine 382, cysteine 363-cysteine 442, cysteine 394-cysteine 412, and cysteine 493-cysteine 549. The segment at 48-201 is OR2; that stretch reads SQVSEGCVAQ…MGATLEWQPR (154 aa). N-linked (GlcNAc...) asparagine glycans are attached at residues asparagine 89, asparagine 135, and asparagine 266. Positions 202 to 330 are OR1, C-terminal part; the sequence is AQTPVQSCRL…SNVSLRASSC (129 aa). Residues 270 to 282 form an essential for interaction with GDF2 region; that stretch reads QILTTGEYSVKIF. N-linked (GlcNAc...) asparagine glycans are attached at residues asparagine 307 and asparagine 322. The 148-residue stretch at 363-510 folds into the ZP domain; it reads CGNQVMTLAL…GDMVELIQSR (148 aa). Residues 582 to 606 form a helical membrane-spanning segment; it reads LVLPSVLGITFGAFLIGALLTAALW. At 607 to 653 the chain is on the cytoplasmic side; the sequence is YIYSHTRGPSKREPVVAVAAPASSESSSTNHSIGSTQSTPCSTSSMA. A compositionally biased stretch (low complexity) spans 624-634; sequence VAAPASSESSS. The disordered stretch occupies residues 624–653; the sequence is VAAPASSESSSTNHSIGSTQSTPCSTSSMA. Residues 635 to 653 show a composition bias toward polar residues; the sequence is TNHSIGSTQSTPCSTSSMA. Residues serine 641 and serine 644 each carry the phosphoserine; by TGFBR1 modification.

In terms of assembly, homodimer; disulfide-linked. Forms a heteromeric complex with the signaling receptors for transforming growth factor-beta: TGFBR1 and/or TGFBR2. Interacts with TGFB1. It is able to bind TGFB1 and TGFB2 with high affinity, but not TGFB3. Interacts with GDF2, forming a heterotetramer with a 2:2 stoichiometry. Interacts with ACVRL1. Can form a heteromeric complex with GDF2 and ACVRL1. Interacts with BMP10. Interacts with DYNLT4. Interacts with ARRB2. As to expression, detected on blood vessels (at protein level). Detected on adult pulmonary artery, capillaries supporting the heart muscle and lung alveolar capillary endothelial cells. Endoglin is restricted to endothelial cells in all tissues except bone marrow and is also found in stromal cells within the connective tissue of intestine, stomach, heart, skeletal muscle, uterus, ovary, oviduct, testis and thymus.

It is found in the cell membrane. In terms of biological role, vascular endothelium glycoprotein that plays an important role in the regulation of angiogenesis. Required for normal structure and integrity of adult vasculature. Regulates the migration of vascular endothelial cells. Required for normal extraembryonic angiogenesis and for embryonic heart development. May regulate endothelial cell shape changes in response to blood flow, which drive vascular remodeling and establishment of normal vascular morphology during angiogenesis. May play a role in the binding of endothelial cells to integrins. Acts as a TGF-beta coreceptor and is involved in the TGF-beta/BMP signaling cascade that ultimately leads to the activation of SMAD transcription factors. Required for GDF2/BMP9 signaling through SMAD1 in endothelial cells and modulates TGFB1 signaling through SMAD3. The chain is Endoglin (Eng) from Mus musculus (Mouse).